Consider the following 477-residue polypeptide: P3 protein (477 aa).

Positions 1 to 21 are disordered; it reads MVLMQDKGSSQQWPGLGGEGG. Helical transmembrane passes span 225–245, 253–273, 281–301, 320–340, 361–381, 383–403, 417–437, and 450–470; these read PMLLGLLGQFLVMPLYAFLMA, ALALGLIITCSSPGGGGSYLF, VTLAISMTFLSTVAATGFLPL, ISKILGTLLFIAIPIAVGVLI, VLLLGGLFLAYRMGVFILAGI, LPIVLVGITVPLVGLLVGYCL, VSIEVGVQNSLLALAMLQLSL, and FIVALSGTSEMLALVIGHFIY.

Belongs to the bile acid:sodium symporter (BASS) (TC 2.A.28) family.

The protein localises to the membrane. The ubiquitous expression and the conservation of the sequence in distant animal species suggest that the gene codes for a protein with housekeeping functions. This is P3 protein (SLC10A3) from Homo sapiens (Human).